The chain runs to 241 residues: Glucosamine-6-phosphate deaminase (241 aa).

The Proton acceptor; for enolization step role is filled by D67. N136 acts as the For ring-opening step in catalysis. The active-site Proton acceptor; for ring-opening step is the H138. E143 (for ring-opening step) is an active-site residue.

Belongs to the glucosamine/galactosamine-6-phosphate isomerase family. NagB subfamily.

It carries out the reaction alpha-D-glucosamine 6-phosphate + H2O = beta-D-fructose 6-phosphate + NH4(+). It functions in the pathway amino-sugar metabolism; N-acetylneuraminate degradation; D-fructose 6-phosphate from N-acetylneuraminate: step 5/5. In terms of biological role, catalyzes the reversible isomerization-deamination of glucosamine 6-phosphate (GlcN6P) to form fructose 6-phosphate (Fru6P) and ammonium ion. The protein is Glucosamine-6-phosphate deaminase of Halothermothrix orenii (strain H 168 / OCM 544 / DSM 9562).